The chain runs to 339 residues: Methylcobamide:CoM methyltransferase MtaA (339 aa).

Positions 237, 239, and 316 each coordinate Zn(2+).

This sequence belongs to the uroporphyrinogen decarboxylase family. MtbA/mtaA subfamily. Zn(2+) serves as cofactor.

The catalysed reaction is methyl-Co(III)-[methanol-specific corrinoid protein] + coenzyme M = Co(I)-[methanol-specific corrinoid protein] + methyl-coenzyme M + H(+). Its function is as follows. Methyltransferase involved in methanogenesis in the methanol pathway. Catalyzes the transfer of the methyl group from the methylated corrinoid protein MtaC to coenzyme M, forming the substrate for coenzyme-B sulfoethylthiotransferase. MtaC can be substituted by free cob(I)alamin in vitro. This Methanosarcina barkeri protein is Methylcobamide:CoM methyltransferase MtaA (mtaA).